The following is a 307-amino-acid chain: UPF0276 protein Bphyt_5128 (307 aa).

This sequence belongs to the UPF0276 family.

This Paraburkholderia phytofirmans (strain DSM 17436 / LMG 22146 / PsJN) (Burkholderia phytofirmans) protein is UPF0276 protein Bphyt_5128.